Here is a 323-residue protein sequence, read N- to C-terminus: Aspartate carbamoyltransferase catalytic subunit (323 aa).

The carbamoyl phosphate site is built by R68 and T69. K96 provides a ligand contact to L-aspartate. Carbamoyl phosphate contacts are provided by R118, H148, and Q151. The L-aspartate site is built by R181 and R236. 2 residues coordinate carbamoyl phosphate: G277 and P278.

The protein belongs to the aspartate/ornithine carbamoyltransferase superfamily. ATCase family. Heterododecamer (2C3:3R2) of six catalytic PyrB chains organized as two trimers (C3), and six regulatory PyrI chains organized as three dimers (R2).

It catalyses the reaction carbamoyl phosphate + L-aspartate = N-carbamoyl-L-aspartate + phosphate + H(+). The protein operates within pyrimidine metabolism; UMP biosynthesis via de novo pathway; (S)-dihydroorotate from bicarbonate: step 2/3. Catalyzes the condensation of carbamoyl phosphate and aspartate to form carbamoyl aspartate and inorganic phosphate, the committed step in the de novo pyrimidine nucleotide biosynthesis pathway. In Verminephrobacter eiseniae (strain EF01-2), this protein is Aspartate carbamoyltransferase catalytic subunit.